A 247-amino-acid polypeptide reads, in one-letter code: DNA polymerase sliding clamp (247 aa).

Belongs to the PCNA family. As to quaternary structure, homotrimer. The subunits circularize to form a toroid; DNA passes through its center. Replication factor C (RFC) is required to load the toroid on the DNA.

Its function is as follows. Sliding clamp subunit that acts as a moving platform for DNA processing. Responsible for tethering the catalytic subunit of DNA polymerase and other proteins to DNA during high-speed replication. The polypeptide is DNA polymerase sliding clamp (Methanospirillum hungatei JF-1 (strain ATCC 27890 / DSM 864 / NBRC 100397 / JF-1)).